Reading from the N-terminus, the 455-residue chain is GTPase Der (455 aa).

EngA-type G domains are found at residues 4–169 (PVVA…PPKD) and 178–353 (IQLS…EQHR). GTP is bound by residues 10-17 (GRPNVGKS), 57-61 (DTGGL), 120-123 (NKCE), 184-191 (GRPNVGKS), 231-235 (DTAGI), and 296-299 (NKWD). Residues 354 to 439 (RRVSTSVVNE…PVKLFWRGKQ (86 aa)) enclose the KH-like domain.

It belongs to the TRAFAC class TrmE-Era-EngA-EngB-Septin-like GTPase superfamily. EngA (Der) GTPase family. In terms of assembly, associates with the 50S ribosomal subunit.

GTPase that plays an essential role in the late steps of ribosome biogenesis. The chain is GTPase Der from Synechococcus sp. (strain CC9311).